The sequence spans 182 residues: Probable inosine/xanthosine triphosphatase (182 aa).

Glutamate 65 serves as a coordination point for Mg(2+). 65–66 (EA) contacts substrate.

The protein belongs to the YjjX NTPase family. As to quaternary structure, homodimer. It depends on Mg(2+) as a cofactor. The cofactor is Mn(2+).

The enzyme catalyses XTP + H2O = XDP + phosphate + H(+). The catalysed reaction is ITP + H2O = IDP + phosphate + H(+). In terms of biological role, phosphatase that hydrolyzes non-canonical purine nucleotides such as XTP and ITP to their respective diphosphate derivatives. Probably excludes non-canonical purines from DNA/RNA precursor pool, thus preventing their incorporation into DNA/RNA and avoiding chromosomal lesions. This is Probable inosine/xanthosine triphosphatase from Pyrobaculum neutrophilum (strain DSM 2338 / JCM 9278 / NBRC 100436 / V24Sta) (Thermoproteus neutrophilus).